The following is a 182-amino-acid chain: ATP-dependent protease subunit HslV (182 aa).

Threonine 10 is an active-site residue. Residues alanine 166, cysteine 169, and serine 172 each coordinate Na(+).

Belongs to the peptidase T1B family. HslV subfamily. As to quaternary structure, a double ring-shaped homohexamer of HslV is capped on each side by a ring-shaped HslU homohexamer. The assembly of the HslU/HslV complex is dependent on binding of ATP.

It localises to the cytoplasm. It carries out the reaction ATP-dependent cleavage of peptide bonds with broad specificity.. Its activity is regulated as follows. Allosterically activated by HslU binding. Functionally, protease subunit of a proteasome-like degradation complex believed to be a general protein degrading machinery. The protein is ATP-dependent protease subunit HslV of Rickettsia bellii (strain OSU 85-389).